The primary structure comprises 209 residues: MGRYIGPVCRLCRREGVKLYLKGERCYSPKCAMERRPYPPGQHGQKRARRPSDYAVRLREKQKLRRIYGISERQFRNLFEEASKKKGVTGSVFLGLLESRLDNVVYRLGFAVSRRQARQLVRHGHITVNGRRVDLPSYRVRPGDEIAVAEKSRNLELIRQNLEAMKGRKVGPWLSLDVEGMKGKFLRLPDREDLALPVNEQLVIEFYSR.

4 residues coordinate Zn(2+): C9, C12, C26, and C31. The segment at 9 to 31 (CRLCRREGVKLYLKGERCYSPKC) adopts a C4-type zinc-finger fold. Residues 100 to 162 (RLDNVVYRLG…RNLELIRQNL (63 aa)) enclose the S4 RNA-binding domain.

It belongs to the universal ribosomal protein uS4 family. In terms of assembly, part of the 30S ribosomal subunit. Contacts protein S5. The interaction surface between S4 and S5 is involved in control of translational fidelity. Requires Zn(2+) as cofactor.

One of the primary rRNA binding proteins, it binds directly to 16S rRNA where it helps nucleate assembly of the body and platform of the 30S subunit. This Thermus thermophilus (strain ATCC BAA-163 / DSM 7039 / HB27) protein is Small ribosomal subunit protein uS4 (rpsD).